Here is an 83-residue protein sequence, read N- to C-terminus: Mu-theraphotoxin-Hhn2j 2 (83 aa).

An N-terminal signal peptide occupies residues 1-21 (MKASMFLALAGLVLLFVVGYA). Positions 22-48 (SESEEKEFPIELLSKIFAVDVFKGEDR) are excised as a propeptide. 3 disulfides stabilise this stretch: Cys50–Cys65, Cys57–Cys70, and Cys64–Cys77. Position 81 is a leucine amide (Leu81).

It belongs to the neurotoxin 10 (Hwtx-1) family. 15 (Hntx-3) subfamily. Monomer. As to expression, expressed by the venom gland.

The protein localises to the secreted. In terms of biological role, lethal neurotoxin. Selectively blocks tetrodotoxin-sensitive voltage-gated sodium channels (Nav). Does not affect tetrodotoxin-resistant voltage-gated sodium channels or calcium channels. The sequence is that of Mu-theraphotoxin-Hhn2j 2 from Cyriopagopus hainanus (Chinese bird spider).